We begin with the raw amino-acid sequence, 552 residues long: MSNAEHSSNFIRNIIIDDLDSKKHDTIITRFPPEPNGYLHIGHAKSIVLNFELGKEFNGRTNLRFDDTNPTKEDTEYVESIKEDVHWLGYNWSELHFASNYFDEMYKRALLLIKKGKAYVCDLTPEEIKEYRGTLTEPGKESPYRNRSVEENLDLFERMRKGEFEDGSKVLRAKIDMSSPNINFRDPIIYRIAHASHHNTGDKWCIYPMYDFAHPLEDAIEGITHSICTLEFADHRPLYDWFVKECEMESVPRQIEFARLNITNTVMSKRKLKQLVDEGIVDGWDDPRMPTVAGLRRRGYTPKSIRNFCKAIGVAKADSTVDSQMLEHFIREDLQETAPRAMAVINPLKLVITNYPEGESEILEIENNPKDESAGKRAVTFSREVYIEREDFMENPPKKYFRLFPGNEVRLKGAYFVKCNEVIKDENGEVTEIHCTYDPETKSGTGFTGRKVKGTIHWVDANNCIPAEFRLYEPLILDDCEENEGKHFLEQINPNSLTICKGFIEPSAKDAKPQDKYQLFRHGYFNVDPNFTSDDNLVFNRIVSLKSSFKLK.

The 'HIGH' region motif lies at 33-43 (PEPNGYLHIGH). ATP-binding positions include 34–36 (EPN) and 40–46 (HIGHAKS). L-glutamine-binding residues include D66 and Y210. ATP-binding positions include T229, 259–260 (RL), and 267–269 (MSK). The short motif at 266-270 (VMSKR) is the 'KMSKS' region element.

Belongs to the class-I aminoacyl-tRNA synthetase family. In terms of assembly, monomer.

The protein localises to the cytoplasm. It carries out the reaction tRNA(Gln) + L-glutamine + ATP = L-glutaminyl-tRNA(Gln) + AMP + diphosphate. The sequence is that of Glutamine--tRNA ligase from Clostridium perfringens (strain ATCC 13124 / DSM 756 / JCM 1290 / NCIMB 6125 / NCTC 8237 / Type A).